Consider the following 74-residue polypeptide: Translation initiation factor IF-1 (74 aa).

The 72-residue stretch at 1–72 folds into the S1-like domain; the sequence is MGKEDVIRME…TRGRIVYRKK (72 aa).

It belongs to the IF-1 family. Component of the 30S ribosomal translation pre-initiation complex which assembles on the 30S ribosome in the order IF-2 and IF-3, IF-1 and N-formylmethionyl-tRNA(fMet); mRNA recruitment can occur at any time during PIC assembly.

It is found in the cytoplasm. One of the essential components for the initiation of protein synthesis. Stabilizes the binding of IF-2 and IF-3 on the 30S subunit to which N-formylmethionyl-tRNA(fMet) subsequently binds. Helps modulate mRNA selection, yielding the 30S pre-initiation complex (PIC). Upon addition of the 50S ribosomal subunit IF-1, IF-2 and IF-3 are released leaving the mature 70S translation initiation complex. This Thermotoga petrophila (strain ATCC BAA-488 / DSM 13995 / JCM 10881 / RKU-1) protein is Translation initiation factor IF-1.